Here is a 339-residue protein sequence, read N- to C-terminus: MSKKIVVAMSGGVDSSYTANLLQSRGYEVIGVYMKFHPREEYHQKNIANIQKVAKHLGIEYHVLDRTKEFQERVYQPFVDSYVAGLTPNPCAMCNRVMKFTELIEFADELGVDNVATGHYAKTDGQFIYEATDKSKDQSYFLFNLKKEFLPRIIFPLGDWYKENVKKEAMKILLLKSIAEQKESSEICFVETNYIDVLKEHTEVEMPGEVVDTHGKVIGEHKGYMHYTIGKRKGFRLFKAHQPHYVLDIIPHKNRIVVGTKEQLEKRQIVLRGLNMFLDQKEFDCYIKIRYRTHKVPCHVKIDGSVASVTLKEPVYGVAKGQAGVFYDEEKVLGGGWIV.

Residues 8–15 (AMSGGVDS) and M34 contribute to the ATP site. Residue C94 is the Nucleophile of the active site. C94 and C188 are joined by a disulfide. G118 contributes to the ATP binding site. The interval 136–138 (KDQ) is interaction with tRNA. C188 serves as the catalytic Cysteine persulfide intermediate. The tract at residues 290–291 (RY) is interaction with tRNA.

The protein belongs to the MnmA/TRMU family.

It is found in the cytoplasm. The enzyme catalyses S-sulfanyl-L-cysteinyl-[protein] + uridine(34) in tRNA + AH2 + ATP = 2-thiouridine(34) in tRNA + L-cysteinyl-[protein] + A + AMP + diphosphate + H(+). Catalyzes the 2-thiolation of uridine at the wobble position (U34) of tRNA, leading to the formation of s(2)U34. The sequence is that of tRNA-specific 2-thiouridylase MnmA from Nitratiruptor sp. (strain SB155-2).